The sequence spans 338 residues: Methionine synthase (338 aa).

Residues histidine 210, cysteine 212, glutamate 234, and cysteine 294 each coordinate Zn(2+).

The protein belongs to the archaeal MetE family. Zn(2+) serves as cofactor.

It participates in amino-acid biosynthesis; L-methionine biosynthesis via de novo pathway. In terms of biological role, catalyzes the transfer of a methyl group to L-homocysteine resulting in methionine formation. The physiological methyl donor is unknown. The polypeptide is Methionine synthase (Pyrococcus abyssi (strain GE5 / Orsay)).